We begin with the raw amino-acid sequence, 159 residues long: Dynein 18 kDa light chain, flagellar outer arm (159 aa).

EF-hand domains follow at residues 18–53 (EEMD…LGQN), 54–89 (PTEE…NKQM), and 129–159 (ELTV…ALLS). 10 residues coordinate Ca(2+): Asp-31, Asp-33, Ser-35, Thr-37, Glu-42, Asp-67, Asp-69, Ser-71, Cys-73, and Glu-78.

Consists of at least 3 heavy chains (alpha, beta and gamma), 2 intermediate chains and 8 light chains.

It localises to the cell projection. The protein localises to the cilium. It is found in the flagellum. Its function is as follows. May be involved in the calcium-mediated regulation of dynein motor function. Binds 1 mole of calcium. The sequence is that of Dynein 18 kDa light chain, flagellar outer arm from Chlamydomonas reinhardtii (Chlamydomonas smithii).